Reading from the N-terminus, the 349-residue chain is Dihydroorotase (349 aa).

Zn(2+) contacts are provided by histidine 17 and histidine 19. Residues histidine 19–arginine 21 and asparagine 45 contribute to the substrate site. Positions 103, 140, and 178 each coordinate Zn(2+). Lysine 103 carries the N6-carboxylysine modification. Substrate is bound at residue histidine 140. Leucine 224 is a binding site for substrate. Aspartate 252 serves as a coordination point for Zn(2+). Residue aspartate 252 is part of the active site. Substrate-binding residues include histidine 256 and alanine 268.

This sequence belongs to the metallo-dependent hydrolases superfamily. DHOase family. Class II DHOase subfamily. Homodimer. Zn(2+) is required as a cofactor.

The catalysed reaction is (S)-dihydroorotate + H2O = N-carbamoyl-L-aspartate + H(+). Its pathway is pyrimidine metabolism; UMP biosynthesis via de novo pathway; (S)-dihydroorotate from bicarbonate: step 3/3. Catalyzes the reversible cyclization of carbamoyl aspartate to dihydroorotate. This is Dihydroorotase from Buchnera aphidicola subsp. Schizaphis graminum (strain Sg).